The primary structure comprises 196 residues: MKQIVKRSHAIRIVAALGIIGLWMFFSSNELSIATPGLIKAKSGIDEVQGAAAEKNDARLKEIEKQTIMPLMGDDKVKKEVGRASWKYFHTLLARFPDEPTPEEREKLHTFIGLYAELYPCGECSYHFVKLIEKYPVQTSSRTAAAMWGCHIHNKVNEYLKKDIYDCATILEDYDCGCSDSDGKRVSLEKEAKQHG.

Residues Met1–Arg12 are Cytoplasmic-facing. A helical; Signal-anchor transmembrane segment spans residues Ile13 to Thr35. At Pro36–Gly196 the chain is on the lumenal side. One can recognise an ERV/ALR sulfhydryl oxidase domain in the interval Met72–Tyr174. FAD contacts are provided by Lys78, Arg83, and Trp86. A disulfide bridge connects residues Cys121 and Cys124. The FAD site is built by His127, Cys150, His153, Asn157, Lys162, and Tyr174. Cys150 and Cys167 are disulfide-bonded. Cys176 and Cys178 are disulfide-bonded.

In terms of assembly, homodimer. Interacts with the substrate protein PDI1, forming transient intermolecular disulfide bridges. Requires FAD as cofactor.

It localises to the endoplasmic reticulum membrane. It carries out the reaction 2 R'C(R)SH + O2 = R'C(R)S-S(R)CR' + H2O2. In terms of biological role, FAD-dependent sulfhydryl oxidase that catalyzes disulfide bond formation in the endoplasmic reticulum lumen in parallel to ERO1. This is FAD-linked sulfhydryl oxidase ERV2 (ERV2) from Saccharomyces cerevisiae (strain ATCC 204508 / S288c) (Baker's yeast).